Reading from the N-terminus, the 147-residue chain is NADH-quinone oxidoreductase subunit A (147 aa).

The next 3 membrane-spanning stretches (helical) occupy residues 13–33 (LFSY…LGAV), 70–90 (YLVA…FSWA), and 104–124 (VVVF…WGAL).

The protein belongs to the complex I subunit 3 family. As to quaternary structure, NDH-1 is composed of 14 different subunits. Subunits NuoA, H, J, K, L, M, N constitute the membrane sector of the complex.

Its subcellular location is the cell inner membrane. It catalyses the reaction a quinone + NADH + 5 H(+)(in) = a quinol + NAD(+) + 4 H(+)(out). In terms of biological role, NDH-1 shuttles electrons from NADH, via FMN and iron-sulfur (Fe-S) centers, to quinones in the respiratory chain. The immediate electron acceptor for the enzyme in this species is believed to be ubiquinone. Couples the redox reaction to proton translocation (for every two electrons transferred, four hydrogen ions are translocated across the cytoplasmic membrane), and thus conserves the redox energy in a proton gradient. The polypeptide is NADH-quinone oxidoreductase subunit A (Gluconacetobacter diazotrophicus (strain ATCC 49037 / DSM 5601 / CCUG 37298 / CIP 103539 / LMG 7603 / PAl5)).